Consider the following 938-residue polypeptide: Phosphoenolpyruvate carboxylase (938 aa).

Active-site residues include H151 and K591.

This sequence belongs to the PEPCase type 1 family. Requires Mg(2+) as cofactor.

The enzyme catalyses oxaloacetate + phosphate = phosphoenolpyruvate + hydrogencarbonate. Functionally, forms oxaloacetate, a four-carbon dicarboxylic acid source for the tricarboxylic acid cycle. The sequence is that of Phosphoenolpyruvate carboxylase from Roseiflexus castenholzii (strain DSM 13941 / HLO8).